The following is a 503-amino-acid chain: Maturase K (503 aa).

This sequence belongs to the intron maturase 2 family. MatK subfamily.

The protein resides in the plastid. The protein localises to the chloroplast. Functionally, usually encoded in the trnK tRNA gene intron. Probably assists in splicing its own and other chloroplast group II introns. The sequence is that of Maturase K from Liquidambar formosana (Formosan gum).